Here is a 302-residue protein sequence, read N- to C-terminus: Protoheme IX farnesyltransferase 1 (302 aa).

8 helical membrane passes run Val-27 to Phe-47, Trp-49 to Phe-69, Ser-98 to Val-118, Leu-121 to Leu-141, Ile-149 to Gly-169, Ala-175 to Ile-195, Leu-228 to Phe-248, and Ile-281 to Leu-301.

It belongs to the UbiA prenyltransferase family. Protoheme IX farnesyltransferase subfamily.

It localises to the cell inner membrane. It carries out the reaction heme b + (2E,6E)-farnesyl diphosphate + H2O = Fe(II)-heme o + diphosphate. Its pathway is porphyrin-containing compound metabolism; heme O biosynthesis; heme O from protoheme: step 1/1. Converts heme B (protoheme IX) to heme O by substitution of the vinyl group on carbon 2 of heme B porphyrin ring with a hydroxyethyl farnesyl side group. In Vibrio parahaemolyticus serotype O3:K6 (strain RIMD 2210633), this protein is Protoheme IX farnesyltransferase 1.